The primary structure comprises 262 residues: 2-keto-4-pentenoate hydratase 2 (262 aa).

This sequence belongs to the hydratase/decarboxylase family. MhpD subfamily. The cofactor is a divalent metal cation.

It carries out the reaction (S)-4-hydroxy-2-oxopentanoate = (2Z)-2-hydroxypenta-2,4-dienoate + H2O. It functions in the pathway aromatic compound metabolism; 3-phenylpropanoate degradation. Catalyzes the conversion of 2-hydroxypentadienoic acid (enolic form of 2-oxopent-4-enoate) to 4-hydroxy-2-ketopentanoic acid. The polypeptide is 2-keto-4-pentenoate hydratase 2 (Dechloromonas aromatica (strain RCB)).